Reading from the N-terminus, the 470-residue chain is Argininosuccinate lyase (470 aa).

The protein belongs to the lyase 1 family. Argininosuccinate lyase subfamily.

Its subcellular location is the cytoplasm. The catalysed reaction is 2-(N(omega)-L-arginino)succinate = fumarate + L-arginine. It functions in the pathway amino-acid biosynthesis; L-arginine biosynthesis; L-arginine from L-ornithine and carbamoyl phosphate: step 3/3. This chain is Argininosuccinate lyase, found in Leptospira borgpetersenii serovar Hardjo-bovis (strain JB197).